The chain runs to 196 residues: Probable calcium-binding protein CML32 (196 aa).

EF-hand domains follow at residues 30-65 (LNAV…LGLV), 121-156 (DEEE…LGLP), and 159-194 (GSLA…ITVW). Ca(2+)-binding residues include Asp-43, Asn-45, Asp-47, Glu-49, Glu-54, Asp-134, Asp-136, Asp-138, Glu-145, Asp-172, Asn-174, Asp-176, Arg-178, and Glu-183.

Potential calcium sensor. This Oryza sativa subsp. japonica (Rice) protein is Probable calcium-binding protein CML32 (CML32).